A 478-amino-acid polypeptide reads, in one-letter code: Divinyl ether synthase CYP74D1 (478 aa).

Cysteine 431 contributes to the heme binding site.

This sequence belongs to the cytochrome P450 family. 9-divinyl ether synthase subfamily. Expressed in roots. Detected in stems, but not in flower buds, petioles, cotyledons or leaves.

It carries out the reaction (9S)-hydroperoxy-(10E,12Z)-octadecadienoate = colneleate + H2O. The enzyme catalyses (9S)-hydroperoxy-(10E,12Z,15Z)-octadecatrienoate = colnelenate + H2O. In terms of biological role, involved in the biosynthesis of the anti-fungal toxins colneleate and colnelenate. Can use (9S)-hydroperoxy-(10E,12Z)-octadecadienoate (9-HPOD) and (9S)-hydroperoxy-(10E,12Z,15Z)-octadecatrienoate (9-HPOT) as substrates, but has a very low activity with the corresponding 13-hydroperoxides (13-HPOD and 13-POT). The polypeptide is Divinyl ether synthase CYP74D1 (Solanum lycopersicum (Tomato)).